Consider the following 417-residue polypeptide: Gamma-glutamyl phosphate reductase (417 aa).

Belongs to the gamma-glutamyl phosphate reductase family.

The protein localises to the cytoplasm. It carries out the reaction L-glutamate 5-semialdehyde + phosphate + NADP(+) = L-glutamyl 5-phosphate + NADPH + H(+). It participates in amino-acid biosynthesis; L-proline biosynthesis; L-glutamate 5-semialdehyde from L-glutamate: step 2/2. Functionally, catalyzes the NADPH-dependent reduction of L-glutamate 5-phosphate into L-glutamate 5-semialdehyde and phosphate. The product spontaneously undergoes cyclization to form 1-pyrroline-5-carboxylate. This is Gamma-glutamyl phosphate reductase from Clostridium novyi (strain NT).